Reading from the N-terminus, the 105-residue chain is Large ribosomal subunit protein uL24 (105 aa).

It belongs to the universal ribosomal protein uL24 family. Part of the 50S ribosomal subunit.

Functionally, one of two assembly initiator proteins, it binds directly to the 5'-end of the 23S rRNA, where it nucleates assembly of the 50S subunit. One of the proteins that surrounds the polypeptide exit tunnel on the outside of the subunit. In Xanthomonas oryzae pv. oryzae (strain PXO99A), this protein is Large ribosomal subunit protein uL24.